A 199-amino-acid chain; its full sequence is MIISAKFITSLVVKFDENLSSNFSEVAFLGRSNVGKSSLINSLCKQKNLAKSSATPGKTQLINFFEVTCKRNEEKFNINFIDLPGFGYAKVSKNLKEIWNQNLDEFLKFRTSIKLFIHLIDSRHTHLEIDVNLNDYLKRFLRPDQKILKVFTKCDKLNQSEKARLKNEFKDSILVSNLNKFGLDSLEDVIINQTLGFDK.

An EngB-type G domain is found at 22–196 (NFSEVAFLGR…EDVIINQTLG (175 aa)). GTP is bound by residues 30–37 (GRSNVGKS), 57–61 (GKTQL), 82–85 (DLPG), 152–155 (TKCD), and 175–177 (VSN). Mg(2+)-binding residues include serine 37 and threonine 59.

It belongs to the TRAFAC class TrmE-Era-EngA-EngB-Septin-like GTPase superfamily. EngB GTPase family. The cofactor is Mg(2+).

Functionally, necessary for normal cell division and for the maintenance of normal septation. The sequence is that of Probable GTP-binding protein EngB from Campylobacter jejuni subsp. doylei (strain ATCC BAA-1458 / RM4099 / 269.97).